The chain runs to 965 residues: UvrABC system protein A (965 aa).

32-39 provides a ligand contact to ATP; it reads GLSGSGKS. Residues 254–281 form a C4-type zinc finger; sequence CPVCDYSLPELEPRLFSFNAPMGACPAC. ABC transporter domains are found at residues 311–588 and 608–937; these read WDRR…PRSL and PNAT…HFLA. 641 to 648 is an ATP binding site; that stretch reads GVSGSGKS. The C4-type zinc finger occupies 740-766; that stretch reads CEACEGDGLIKVEMHFLPDVYVPCDIC.

This sequence belongs to the ABC transporter superfamily. UvrA family. Forms a heterotetramer with UvrB during the search for lesions.

It localises to the cytoplasm. Functionally, the UvrABC repair system catalyzes the recognition and processing of DNA lesions. UvrA is an ATPase and a DNA-binding protein. A damage recognition complex composed of 2 UvrA and 2 UvrB subunits scans DNA for abnormalities. When the presence of a lesion has been verified by UvrB, the UvrA molecules dissociate. This Xylella fastidiosa (strain Temecula1 / ATCC 700964) protein is UvrABC system protein A.